We begin with the raw amino-acid sequence, 409 residues long: Bone morphogenetic protein 4 (409 aa).

The signal sequence occupies residues 1 to 24 (MIPGNRMLMVVLLCQVLLGGASHA). The propeptide occupies 25 to 293 (SLIPETGKKK…ALTRRRRAKR (269 aa)). Serine 91 carries the post-translational modification Phosphoserine. N-linked (GlcNAc...) asparagine glycosylation is found at asparagine 144 and asparagine 209. A disordered region spans residues 284 to 308 (ALTRRRRAKRSPKHHPQRARKKNKN). Disulfide bonds link cysteine 309–cysteine 374, cysteine 338–cysteine 406, and cysteine 342–cysteine 408. 2 N-linked (GlcNAc...) asparagine glycosylation sites follow: asparagine 351 and asparagine 366.

It belongs to the TGF-beta family. As to quaternary structure, homodimer; disulfide-linked. Interacts with GREM2. Part of a complex consisting of TWSG1 and CHRD. Interacts with the serine proteases, HTRA1 and HTRA3; the interaction with either inhibits BMP4-mediated signaling. The HTRA protease activity is required for this inhibition. Interacts with SOSTDC1. Interacts with FBN1 (via N-terminal domain) and FBN2. Interacts with type I receptor BMPR1A. Interacts with type II receptor BMPR2. Interacts with FSTL1; this interaction inhibits the activation of the BMP4/Smad1/5/8 signaling pathway. Interacts with SCUBE3. Interacts with TGFBR3.

The protein localises to the secreted. It is found in the extracellular space. The protein resides in the extracellular matrix. Its function is as follows. Growth factor of the TGF-beta superfamily that plays essential roles in many developmental processes, including neurogenesis, vascular development, angiogenesis and osteogenesis. Acts in concert with PTHLH/PTHRP to stimulate ductal outgrowth during embryonic mammary development and to inhibit hair follicle induction. Initiates the canonical BMP signaling cascade by associating with type I receptor BMPR1A and type II receptor BMPR2. Once all three components are bound together in a complex at the cell surface, BMPR2 phosphorylates and activates BMPR1A. In turn, BMPR1A propagates signal by phosphorylating SMAD1/5/8 that travel to the nucleus and act as activators and repressors of transcription of target genes. Positively regulates the expression of odontogenic development regulator MSX1 via inducing the IPO7-mediated import of SMAD1 to the nucleus. Required for MSX1-mediated mesenchymal molar tooth bud development beyond the bud stage, via promoting Wnt signaling. Acts as a positive regulator of odontoblast differentiation during mesenchymal tooth germ formation, expression is repressed during the bell stage by MSX1-mediated inhibition of CTNNB1 signaling. Able to induce its own expression in dental mesenchymal cells and also in the neighboring dental epithelial cells via an MSX1-mediated pathway. Can also signal through non-canonical BMP pathways such as ERK/MAP kinase, PI3K/Akt, or SRC cascades. For example, induces SRC phosphorylation which, in turn, activates VEGFR2, leading to an angiogenic response. This chain is Bone morphogenetic protein 4, found in Bos taurus (Bovine).